A 283-amino-acid polypeptide reads, in one-letter code: Phosphatidylserine decarboxylase proenzyme (283 aa).

Residues Asp89, His146, and Ser249 each act as charge relay system; for autoendoproteolytic cleavage activity in the active site. Residue Ser249 is the Schiff-base intermediate with substrate; via pyruvic acid; for decarboxylase activity of the active site. Ser249 bears the Pyruvic acid (Ser); by autocatalysis mark.

Belongs to the phosphatidylserine decarboxylase family. PSD-B subfamily. Prokaryotic type I sub-subfamily. In terms of assembly, heterodimer of a large membrane-associated beta subunit and a small pyruvoyl-containing alpha subunit. Pyruvate serves as cofactor. Is synthesized initially as an inactive proenzyme. Formation of the active enzyme involves a self-maturation process in which the active site pyruvoyl group is generated from an internal serine residue via an autocatalytic post-translational modification. Two non-identical subunits are generated from the proenzyme in this reaction, and the pyruvate is formed at the N-terminus of the alpha chain, which is derived from the carboxyl end of the proenzyme. The autoendoproteolytic cleavage occurs by a canonical serine protease mechanism, in which the side chain hydroxyl group of the serine supplies its oxygen atom to form the C-terminus of the beta chain, while the remainder of the serine residue undergoes an oxidative deamination to produce ammonia and the pyruvoyl prosthetic group on the alpha chain. During this reaction, the Ser that is part of the protease active site of the proenzyme becomes the pyruvoyl prosthetic group, which constitutes an essential element of the active site of the mature decarboxylase.

It is found in the cell membrane. The enzyme catalyses a 1,2-diacyl-sn-glycero-3-phospho-L-serine + H(+) = a 1,2-diacyl-sn-glycero-3-phosphoethanolamine + CO2. It functions in the pathway phospholipid metabolism; phosphatidylethanolamine biosynthesis; phosphatidylethanolamine from CDP-diacylglycerol: step 2/2. Functionally, catalyzes the formation of phosphatidylethanolamine (PtdEtn) from phosphatidylserine (PtdSer). The polypeptide is Phosphatidylserine decarboxylase proenzyme (Legionella pneumophila (strain Corby)).